The primary structure comprises 227 residues: Ribose-5-phosphate isomerase A (227 aa).

Residues 26–29, 82–85, and 95–98 contribute to the substrate site; these read TGST, DGAD, and KGGG. Glutamate 104 (proton acceptor) is an active-site residue. Lysine 122 provides a ligand contact to substrate.

It belongs to the ribose 5-phosphate isomerase family. Homodimer.

The enzyme catalyses aldehydo-D-ribose 5-phosphate = D-ribulose 5-phosphate. Its pathway is carbohydrate degradation; pentose phosphate pathway; D-ribose 5-phosphate from D-ribulose 5-phosphate (non-oxidative stage): step 1/1. Its function is as follows. Catalyzes the reversible conversion of ribose-5-phosphate to ribulose 5-phosphate. This Streptococcus pneumoniae serotype 2 (strain D39 / NCTC 7466) protein is Ribose-5-phosphate isomerase A.